A 364-amino-acid chain; its full sequence is Tyrosyl-DNA phosphodiesterase 2 (364 aa).

Position 1 is an N-acetylmethionine (Met1). Residues 1-10 are compositionally biased toward low complexity; that stretch reads MERNSGPEAG. Positions 1–21 are disordered; that stretch reads MERNSGPEAGPEAELEEGEPE. A Glycyl lysine isopeptide (Lys-Gly) (interchain with G-Cter in SUMO2) cross-link involves residue Lys23. Residues 68–108 are disordered; it reads ESASESRPESLSEPGSCVDLTKEETNDSISSKTSTSEDKSV. Thr88 and Thr92 each carry phosphothreonine; by ACVR1B. Ser95 is modified (phosphoserine). An interaction with 5' end of substrate DNA region spans residues 122 to 126; it reads NIDGL. Mg(2+) contacts are provided by Asp124 and Glu154. The segment at 228-233 is interaction with 5' end of substrate DNA; the sequence is HLESTR. Asp264 functions as the Proton donor/acceptor in the catalytic mechanism. An interaction with 5' end of substrate DNA region spans residues 266–268; it reads NLR.

Belongs to the CCR4/nocturin family. Interacts with TRAF2, TRAF3, TRAF5, TRAF6, TNFRSF8/CD30, TNFRSF5/CD40, TNFRSF1B/TNF-R75, ETS1, ETS2, FLI1, SMAD3 and ACVR1B/ALK4. Mg(2+) is required as a cofactor. Mn(2+) serves as cofactor. Post-translationally, ubiquitinated by TRAF6.

The protein resides in the nucleus. Its subcellular location is the PML body. It is found in the nucleolus. The protein localises to the cytoplasm. Functionally, DNA repair enzyme that can remove a variety of covalent adducts from DNA through hydrolysis of a 5'-phosphodiester bond, giving rise to DNA with a free 5' phosphate. Catalyzes the hydrolysis of dead-end complexes between DNA and the topoisomerase 2 (TOP2) active site tyrosine residue. The 5'-tyrosyl DNA phosphodiesterase activity can enable the repair of TOP2-induced DNA double-strand breaks/DSBs without the need for nuclease activity, creating a 'clean' DSB with 5'-phosphate termini that are ready for ligation. Thereby, protects the transcription of many genes involved in neurological development and maintenance from the abortive activity of TOP2. Hydrolyzes 5'-phosphoglycolates on protruding 5' ends on DSBs due to DNA damage by radiation and free radicals. Has preference for single-stranded DNA or duplex DNA with a 4 base pair overhang as substrate. Also has 3'-tyrosyl DNA phosphodiesterase activity, but less efficiently and much slower than TDP1. Constitutes the major if not only 5'-tyrosyl-DNA phosphodiesterase in cells. Also acts as an adapter by participating in the specific activation of MAP3K7/TAK1 in response to TGF-beta: associates with components of the TGF-beta receptor-TRAF6-TAK1 signaling module and promotes their ubiquitination dependent complex formation. Involved in non-canonical TGF-beta induced signaling routes. May also act as a negative regulator of ETS1 and may inhibit NF-kappa-B activation. Acts as a regulator of ribosome biogenesis following stress. The chain is Tyrosyl-DNA phosphodiesterase 2 (TDP2) from Bos taurus (Bovine).